A 185-amino-acid chain; its full sequence is MIILGIDEAGRGPLSGPVVAAGVILDQDKIIDGLADSKKLTEKKRQSLYQQIITHAKAYTIVEISPQQIDELNILQATLKAMHQVANNLERQFDKVLVDGNKLPNWDYNSEAIVKGDSKIIEISAASILAKVHRDNICLEHDRLYPQYGFAKHKGYPTKEHLENIKKYGVLDIHRKSYKPIQLLL.

One can recognise an RNase H type-2 domain in the interval 1–185; it reads MIILGIDEAG…KSYKPIQLLL (185 aa). Residues D7, E8, and D99 each contribute to the a divalent metal cation site.

The protein belongs to the RNase HII family. Mn(2+) serves as cofactor. Requires Mg(2+) as cofactor.

Its subcellular location is the cytoplasm. The enzyme catalyses Endonucleolytic cleavage to 5'-phosphomonoester.. Its function is as follows. Endonuclease that specifically degrades the RNA of RNA-DNA hybrids. This chain is Ribonuclease HII, found in Francisella tularensis subsp. novicida (strain U112).